Here is a 324-residue protein sequence, read N- to C-terminus: DNA-directed RNA polymerase subunit alpha (324 aa).

Residues methionine 1 to glutamate 230 form an alpha N-terminal domain (alpha-NTD) region. Positions valine 244 to alanine 324 are alpha C-terminal domain (alpha-CTD).

This sequence belongs to the RNA polymerase alpha chain family. In terms of assembly, homodimer. The RNAP catalytic core consists of 2 alpha, 1 beta, 1 beta' and 1 omega subunit. When a sigma factor is associated with the core the holoenzyme is formed, which can initiate transcription.

It catalyses the reaction RNA(n) + a ribonucleoside 5'-triphosphate = RNA(n+1) + diphosphate. Functionally, DNA-dependent RNA polymerase catalyzes the transcription of DNA into RNA using the four ribonucleoside triphosphates as substrates. In Dechloromonas aromatica (strain RCB), this protein is DNA-directed RNA polymerase subunit alpha.